Here is a 447-residue protein sequence, read N- to C-terminus: GTPase Der (447 aa).

EngA-type G domains lie at 4-165 (QIIT…PEEE) and 180-357 (LQIV…KIWN). GTP contacts are provided by residues 10-17 (GRPNVGKS), 57-61 (DTPGL), 119-122 (NKCE), 186-193 (GRPNAGKS), 233-237 (DTAGL), and 298-301 (NKWD). A KH-like domain is found at 358-443 (KKITTSKLNE…PIRFIYVKTK (86 aa)).

It belongs to the TRAFAC class TrmE-Era-EngA-EngB-Septin-like GTPase superfamily. EngA (Der) GTPase family. Associates with the 50S ribosomal subunit.

In terms of biological role, GTPase that plays an essential role in the late steps of ribosome biogenesis. In Rickettsia africae (strain ESF-5), this protein is GTPase Der.